Here is a 153-residue protein sequence, read N- to C-terminus: Large ribosomal subunit protein uL22 (153 aa).

The disordered stretch occupies residues 128-153 (ADRRARRAAAKPAASASPAANEGVPA). Over residues 137-147 (AKPAASASPAA) the composition is skewed to low complexity.

Belongs to the universal ribosomal protein uL22 family. Part of the 50S ribosomal subunit.

In terms of biological role, this protein binds specifically to 23S rRNA; its binding is stimulated by other ribosomal proteins, e.g. L4, L17, and L20. It is important during the early stages of 50S assembly. It makes multiple contacts with different domains of the 23S rRNA in the assembled 50S subunit and ribosome. Its function is as follows. The globular domain of the protein is located near the polypeptide exit tunnel on the outside of the subunit, while an extended beta-hairpin is found that lines the wall of the exit tunnel in the center of the 70S ribosome. The sequence is that of Large ribosomal subunit protein uL22 from Acidiphilium cryptum (strain JF-5).